A 257-amino-acid polypeptide reads, in one-letter code: Large ribosomal subunit protein uL2 (257 aa).

The tract at residues 210 to 231 (PHGGGNHQHIGKASTVKRGTSA) is disordered.

It belongs to the universal ribosomal protein uL2 family.

Its subcellular location is the cytoplasm. This is Large ribosomal subunit protein uL2 (RpL8) from Mamestra brassicae (Cabbage moth).